A 106-amino-acid chain; its full sequence is Minor capsid protein VP2 (106 aa).

Belongs to the vesivirus VP2 protein family. Homooligomer. The portal-like structure consists in 12 copies of VP2. Interacts with capsid protein VP1.

The protein localises to the virion. It is found in the host cytoplasm. Its function is as follows. Minor structural protein that forms a portal-like structure at a unique three-fold axis of symmetry, following binding to the host receptor. The virion attaches to feline junctional adhesion molecule A (F11R). Once attached, the virion is endocytosed. Acidification of the endosome induces conformational change of capsid protein thereby injecting virus genomic RNA into host cytoplasm. The channel formed by VP2 may allow the delivery of the viral genome through the host endosomal membrane. The protein is Minor capsid protein VP2 of Feline calicivirus (strain Cat/United States/Urbana/1960) (FCV).